A 184-amino-acid chain; its full sequence is ATP synthase subunit b 1 (184 aa).

A helical membrane pass occupies residues 4–24 (LSILAALAASPAMAATGPFFS).

It belongs to the ATPase B chain family. In terms of assembly, F-type ATPases have 2 components, F(1) - the catalytic core - and F(0) - the membrane proton channel. F(1) has five subunits: alpha(3), beta(3), gamma(1), delta(1), epsilon(1). F(0) has three main subunits: a(1), b(2) and c(10-14). The alpha and beta chains form an alternating ring which encloses part of the gamma chain. F(1) is attached to F(0) by a central stalk formed by the gamma and epsilon chains, while a peripheral stalk is formed by the delta and b chains.

The protein resides in the cell inner membrane. F(1)F(0) ATP synthase produces ATP from ADP in the presence of a proton or sodium gradient. F-type ATPases consist of two structural domains, F(1) containing the extramembraneous catalytic core and F(0) containing the membrane proton channel, linked together by a central stalk and a peripheral stalk. During catalysis, ATP synthesis in the catalytic domain of F(1) is coupled via a rotary mechanism of the central stalk subunits to proton translocation. In terms of biological role, component of the F(0) channel, it forms part of the peripheral stalk, linking F(1) to F(0). This chain is ATP synthase subunit b 1, found in Cereibacter sphaeroides (strain ATCC 17025 / ATH 2.4.3) (Rhodobacter sphaeroides).